A 69-amino-acid chain; its full sequence is Pleurain-A2 (69 aa).

An N-terminal signal peptide occupies residues 1 to 22; sequence MFTLKKTLLLLYFLGTISISLC. Positions 23–43 are excised as a propeptide; it reads KQERDADEDDGRKMTEEEVKR. Cys-63 and Cys-69 are disulfide-bonded.

As to expression, expressed by the skin glands.

The protein localises to the secreted. Functionally, antimicrobial peptide. Has activity against the Gram-positive bacterium S.aureus ATCC2592 (MIC=15 ug/ml), the Gram-negative bacteria E.coli ATCC25922 (MIC=60 ug/ml), B.dysenteriae (MIC=60 ug/ml), H.pylori NTCT11637 (MIC=30 ug/ml), and the fungus C.albicans ATCC2002 (MIC=30 ug/ml). Has little hemolytic activity on rabbit red blood cells. In Nidirana pleuraden (Yunnan pond frog), this protein is Pleurain-A2.